A 163-amino-acid polypeptide reads, in one-letter code: Ubiquitin-like protein 1-ribosomal protein eS31 fusion protein (163 aa).

In terms of domain architecture, Ubiquitin-like spans 1 to 70; sequence MVFVKTLNRT…IYVNLELLGG (70 aa). Gly-70 participates in a covalent cross-link: Glycyl lysine isopeptide (Gly-Lys) (interchain with K-? in acceptor proteins). Residues 115–138 form a C4-type zinc finger; the sequence is CQQPSCGGGVFMAQHANRHYCGRC.

In the N-terminal section; belongs to the ubiquitin family. This sequence in the C-terminal section; belongs to the eukaryotic ribosomal protein eS31 family.

The sequence is that of Ubiquitin-like protein 1-ribosomal protein eS31 fusion protein (ubl-1) from Caenorhabditis briggsae.